The following is a 196-amino-acid chain: Phosphoheptose isomerase (196 aa).

Residues 36–195 (VIQAYKLGKK…EKELFGEKVD (160 aa)) form the SIS domain. 51–53 (NGG) is a substrate binding site. Residues H60 and E64 each coordinate Zn(2+). Residues E64, 93–94 (ND), 119–121 (STS), S124, and Q171 each bind substrate. The Zn(2+) site is built by Q171 and H179.

This sequence belongs to the SIS family. GmhA subfamily. The cofactor is Zn(2+).

The protein localises to the cytoplasm. It carries out the reaction 2 D-sedoheptulose 7-phosphate = D-glycero-alpha-D-manno-heptose 7-phosphate + D-glycero-beta-D-manno-heptose 7-phosphate. It participates in carbohydrate biosynthesis; D-glycero-D-manno-heptose 7-phosphate biosynthesis; D-glycero-alpha-D-manno-heptose 7-phosphate and D-glycero-beta-D-manno-heptose 7-phosphate from sedoheptulose 7-phosphate: step 1/1. Its function is as follows. Catalyzes the isomerization of sedoheptulose 7-phosphate in D-glycero-D-manno-heptose 7-phosphate. The protein is Phosphoheptose isomerase of Clostridium acetobutylicum (strain ATCC 824 / DSM 792 / JCM 1419 / IAM 19013 / LMG 5710 / NBRC 13948 / NRRL B-527 / VKM B-1787 / 2291 / W).